The primary structure comprises 162 residues: Toluate 1,2-dioxygenase subunit beta (162 aa).

The protein belongs to the bacterial ring-hydroxylating dioxygenase beta subunit family. This dioxygenase system consists of three proteins: the two subunits of the hydroxylase component (XylX and XylY), and an electron transfer component (XylZ).

Its pathway is xenobiotic degradation; toluene degradation. The sequence is that of Toluate 1,2-dioxygenase subunit beta (xylY) from Pseudomonas putida (Arthrobacter siderocapsulatus).